The chain runs to 1633 residues: MTSILWLFSLAVLWHMGQPQPAELYPSVDPNHFGADGNPCYDRATRQPQRCVPDFVNAAFNLEVQVTNTCGTKRPTKFCVQSGHTGQRSVCETCDDRHEGFSHPAKYLTDFNVGNNETWWQSDTMQEGQQYPTTTNLTLVLGKSFDITYVRLKFISPRPESFTIYKKTHTDSEWEPWQFYSGSCRATYGLSDRAPILPGNEATAQCTKEFSDISPITGGNIAFSTLEGRPSAHAFEESEVLQKWVTASAIRISLNRMNTFGDEVFKDPQVLRSYYYAISDFAVGGRCKCNGHASECVGSSSVDGENRLVCRCEHNTQGADCNECLPFYNDRPWRSGTSVEANECIACNCSQLSNRCYFDQQLFEETGHGGHCIDCQGNTQGVHCEQCIANHWRRPGENYCVACGCNEIGSLSTQCDNEGKCQCKPGVTGRFCDQCLDGFYDFSTNGCKNCGCETSGSLNNQPRCDSSSGSCSCKLNVEGRQCDKCKPGYFDLSTENQFGCTPCFCFGHSSICNTADGYFAMNVSSVFDQDKQKWAGQNRIGLQDTQWAELDKAVAVSDTDNSPVYFVAPEQFLGDQRSSYNQDLVFTLKVAKHVTNQDVKDIIIVGADRQELSTSITAQGNPFPTTEAQTYRFRVHADPYFGWYPRINELDFIGILSNITAIKIRGTYSYKDIGYLSNVNLGTAGVAPSAANPKQATWIEHCECLPGFVGQFCESCESGFRRETKFGGPFNHCIKCDCHNHSNSCEAESGSCICEHNTAGDTCERCARGYYGDALQGTEEDCQKCPCPNDGPCILHADGDVICTECPNGYTGRRCDECSDGYFGNPKDGTECVECACSGNTDPNSIGNCDKITGECKKCIFNTHGFNCENCKPGYWGDALIEPKGNCQSCGCFAAGTRRPNNDYTLLECNQQDGQCDCLPNVIGIQCDQCAHGFYNITSGLGCQECNCDPLGSEGNTCDVNTGQCQCKPGVTGQRCDRCADYHFGFSANGCQPCDCEYIGSENQQCDVNSGQCLCKENVEGRRCDQCAENRYGITQGCLPCDDCYTLIQSRVNVFREKVKSLDNTLQEIIENPAPVNDTKFDEKVKETSRAASEVWEAVKQKTKEGGGTIKTKSKAIKDEIVAALEKLTSIDESVAQAKVGADAAENDMKRWEIIIENARREIENVLHYLETEGEERAQIAYNASQKYGEQSKRMSELASGTREEAEKHLKQASEIEQLSEQAIANATQANKEASDAIYGGEQISKQIAELKEKQNQLNESIHRTLDLAEEQKKSADEANNLAAVSLTNVEAVKIPSVDPKELRNDVAGVLEESENLVDSSVKENSANDELFDEVNRSVADARNELQSSQDQQRVSDQLMLELEKSRERIVDSVSTADKTLKDAEAALQVLEEFGAKIEKSRNDAVAEFAGVEGINQRLDDIIDAQDKRRNSLPIDKQFVIDYRKSADVLLNETHALADRYKDIIHSDVDTRDSTEAVQYDIEQLMEELTDSNENLQYYKKQAEDDKQMATEAVRKATLAKNSAIEANATILAEEDEIKKIINSLDTMEEVNNAELDELEEEIDRLDQLLAQAQLAKEVPTYQQYRADEDVKVAQLKNDISELQKEVLNLEEIRDNLPTKCFNVINLEQEGQK.

Residues 1-19 form the signal peptide; it reads MTSILWLFSLAVLWHMGQP. The 240-residue stretch at 47–286 folds into the Laminin N-terminal domain; that stretch reads QPQRCVPDFV…AISDFAVGGR (240 aa). Asparagine 116 and asparagine 136 each carry an N-linked (GlcNAc...) asparagine glycan. 16 disulfide bridges follow: cysteine 287-cysteine 296, cysteine 289-cysteine 310, cysteine 312-cysteine 321, cysteine 324-cysteine 344, cysteine 347-cysteine 356, cysteine 349-cysteine 372, cysteine 375-cysteine 384, cysteine 387-cysteine 400, cysteine 403-cysteine 415, cysteine 405-cysteine 421, cysteine 423-cysteine 432, cysteine 435-cysteine 447, cysteine 450-cysteine 464, cysteine 452-cysteine 471, cysteine 473-cysteine 482, and cysteine 485-cysteine 500. Laminin EGF-like domains follow at residues 287-346, 347-402, 403-449, and 450-502; these read CKCN…ECIA, CNCS…YCVA, CGCN…GCKN, and CGCE…GCTP. Residue asparagine 348 is glycosylated (N-linked (GlcNAc...) asparagine). Residues 503–512 enclose the Laminin EGF-like 5; first part domain; that stretch reads CFCFGHSSIC. Asparagine 522, asparagine 658, and asparagine 740 each carry an N-linked (GlcNAc...) asparagine glycan. One can recognise a Laminin IV type A domain in the interval 529 to 701; that stretch reads QDKQKWAGQN…NPKQATWIEH (173 aa). A Laminin EGF-like 5; second part domain is found at 702–747; it reads CECLPGFVGQFCESCESGFRRETKFGGPFNHCIKCDCHNHSNSCEA. 23 cysteine pairs are disulfide-bonded: cysteine 736-cysteine 745, cysteine 738-cysteine 752, cysteine 754-cysteine 763, cysteine 766-cysteine 782, cysteine 785-cysteine 803, cysteine 806-cysteine 815, cysteine 818-cysteine 832, cysteine 835-cysteine 849, cysteine 837-cysteine 856, cysteine 859-cysteine 868, cysteine 871-cysteine 887, cysteine 890-cysteine 909, cysteine 892-cysteine 916, cysteine 918-cysteine 927, cysteine 930-cysteine 943, cysteine 946-cysteine 958, cysteine 948-cysteine 965, cysteine 967-cysteine 976, cysteine 979-cysteine 991, cysteine 994-cysteine 1006, cysteine 996-cysteine 1013, cysteine 1015-cysteine 1024, and cysteine 1027-cysteine 1038. In terms of domain architecture, Laminin EGF-like 6; truncated spans 752–784; that stretch reads CICEHNTAGDTCERCARGYYGDALQGTEEDCQK. 5 consecutive Laminin EGF-like domains span residues 785–834, 835–889, 890–945, 946–993, and 994–1040; these read CPCP…ECVE, CACS…NCQS, CGCF…GCQE, CNCD…GCQP, and CDCE…GCLP. N-linked (GlcNAc...) asparagine glycosylation occurs at asparagine 936. N-linked (GlcNAc...) asparagine glycans are attached at residues asparagine 1077, asparagine 1183, asparagine 1226, asparagine 1259, asparagine 1336, asparagine 1452, and asparagine 1528.

During the formation of neuromuscular junctions at the larval stage, negatively regulates membrane protrusion from body wall muscles, probably downstream of the integrin complex formed by pat-2 and pat-3. The chain is Laminin-like protein lam-2 (lam-2) from Caenorhabditis elegans.